Here is a 243-residue protein sequence, read N- to C-terminus: Probable aquaporin SIP1-2 (243 aa).

A run of 2 helical transmembrane segments spans residues Val12–Val32 and Trp42–Ile62. The short motif at Asn72 to Cys74 is the NPA 1 element. 3 helical membrane passes run Phe90–Ile110, Gly135–Leu155, and Leu162–Phe182. The NPA 2 signature appears at Asn188 to Ala190. Residues Val210 to Phe230 traverse the membrane as a helical segment.

It belongs to the MIP/aquaporin (TC 1.A.8) family. SIP (TC 1.A.8.10) subfamily. As to expression, expressed in roots and above ground. Expressed in elongating regions of the root tips, cotyledons, minor veins and hydathode cells of the rosette leaves. Weakly expressed in vascular tissues of the flower petals, filaments of stamens, upper part of the styles and receptacles of the siliques.

The protein localises to the endoplasmic reticulum membrane. Its function is as follows. Water channel required to facilitate the transport of water across cell membrane. This is Probable aquaporin SIP1-2 (SIP1-2) from Arabidopsis thaliana (Mouse-ear cress).